The primary structure comprises 193 residues: Putative manganese efflux pump MntP (193 aa).

6 helical membrane passes run 3–23 (LATLTVLGFSLSADAFAAALG), 39–59 (VGAYFGAFEAAAPLIGWALGL), 65–85 (IAAFDHWVAFTLLAGVGGHMV), 113–133 (LALAALATSIDATAVGIGLAV), 138–158 (ILMACALIGAITTVVAAGGVL), and 173–193 (VLGGLALIGIGLKILIEHLSA).

This sequence belongs to the MntP (TC 9.B.29) family.

The protein localises to the cell inner membrane. Functionally, probably functions as a manganese efflux pump. The protein is Putative manganese efflux pump MntP of Rhodospirillum rubrum (strain ATCC 11170 / ATH 1.1.1 / DSM 467 / LMG 4362 / NCIMB 8255 / S1).